We begin with the raw amino-acid sequence, 96 residues long: Large ribosomal subunit protein eL14 (96 aa).

This sequence belongs to the eukaryotic ribosomal protein eL14 family.

This is Large ribosomal subunit protein eL14 from Sulfurisphaera tokodaii (strain DSM 16993 / JCM 10545 / NBRC 100140 / 7) (Sulfolobus tokodaii).